Here is a 137-residue protein sequence, read N- to C-terminus: ATP synthase epsilon chain (137 aa).

This sequence belongs to the ATPase epsilon chain family. As to quaternary structure, F-type ATPases have 2 components, CF(1) - the catalytic core - and CF(0) - the membrane proton channel. CF(1) has five subunits: alpha(3), beta(3), gamma(1), delta(1), epsilon(1). CF(0) has three main subunits: a, b and c.

Its subcellular location is the cellular thylakoid membrane. Its function is as follows. Produces ATP from ADP in the presence of a proton gradient across the membrane. This chain is ATP synthase epsilon chain, found in Trichodesmium erythraeum (strain IMS101).